Consider the following 314-residue polypeptide: tRNA N6-adenosine threonylcarbamoyltransferase (314 aa).

H106, H110, and Y127 together coordinate Fe cation. Residues 127–131 (YVSGA), D159, G172, E176, and N255 contribute to the substrate site. Fe cation is bound at residue D283.

It belongs to the KAE1 / TsaD family. The cofactor is Fe(2+).

Its subcellular location is the cytoplasm. The catalysed reaction is L-threonylcarbamoyladenylate + adenosine(37) in tRNA = N(6)-L-threonylcarbamoyladenosine(37) in tRNA + AMP + H(+). In terms of biological role, required for the formation of a threonylcarbamoyl group on adenosine at position 37 (t(6)A37) in tRNAs that read codons beginning with adenine. Is probably involved in the transfer of the threonylcarbamoyl moiety of threonylcarbamoyl-AMP (TC-AMP) to the N6 group of A37. This Nanoarchaeum equitans (strain Kin4-M) protein is tRNA N6-adenosine threonylcarbamoyltransferase.